Reading from the N-terminus, the 271-residue chain is tRNA pseudouridine synthase A (271 aa).

Asp-51 acts as the Nucleophile in catalysis. Residue Tyr-109 participates in substrate binding.

It belongs to the tRNA pseudouridine synthase TruA family. As to quaternary structure, homodimer.

The catalysed reaction is uridine(38/39/40) in tRNA = pseudouridine(38/39/40) in tRNA. In terms of biological role, formation of pseudouridine at positions 38, 39 and 40 in the anticodon stem and loop of transfer RNAs. This Methylococcus capsulatus (strain ATCC 33009 / NCIMB 11132 / Bath) protein is tRNA pseudouridine synthase A.